The following is a 349-amino-acid chain: Magnesium-protoporphyrin IX monomethyl ester [oxidative] cyclase (349 aa).

Over residues 1-10 the composition is skewed to low complexity; sequence MTATTATAPA. The tract at residues 1 to 23 is disordered; it reads MTATTATAPAMRGGGRNELPPHL.

The protein belongs to the AcsF family. The cofactor is Fe cation.

The enzyme catalyses Mg-protoporphyrin IX 13-monomethyl ester + 3 NADPH + 3 O2 + 2 H(+) = 3,8-divinyl protochlorophyllide a + 3 NADP(+) + 5 H2O. The protein operates within porphyrin-containing compound metabolism; chlorophyll biosynthesis (light-independent). Its function is as follows. Catalyzes the formation of the isocyclic ring in chlorophyll biosynthesis. Mediates the cyclase reaction, which results in the formation of divinylprotochlorophyllide (Pchlide) characteristic of all chlorophylls from magnesium-protoporphyrin IX 13-monomethyl ester (MgPMME). The sequence is that of Magnesium-protoporphyrin IX monomethyl ester [oxidative] cyclase from Prochlorococcus marinus (strain MIT 9303).